A 791-amino-acid chain; its full sequence is ABC multidrug transporter mdr2 (791 aa).

N-linked (GlcNAc...) asparagine glycosylation is present at Asn147. The next 2 membrane-spanning stretches (helical) occupy residues 182–202 and 220–240; these read ALAFLFLLVSSGITMSIPFSI and LFGLSLPMFYGALAGILTLGA. Residues 182–471 enclose the ABC transmembrane type-1 domain; that stretch reads ALAFLFLLVS…LSSFYSELMK (290 aa). A glycan (N-linked (GlcNAc...) asparagine) is linked at Asn303. Helical transmembrane passes span 307-324 and 326-346; these read GLRAAVSGAAGFGLMAYV and LKLSSILALLLPPIGLGAFFY. Residues Asn352 and Asn421 are each glycosylated (N-linked (GlcNAc...) asparagine). A run of 2 helical transmembrane segments spans residues 422–442 and 445–465; these read MTILALLYVGGGMVQSGAITI and LTSFLMYTAYAGSSMFGLSSF. The 238-residue stretch at 504–741 folds into the ABC transporter domain; the sequence is IRFENVTFSY…PDGAFTKLME (238 aa). Asn508 carries N-linked (GlcNAc...) asparagine glycosylation. 539 to 546 is a binding site for ATP; the sequence is GPSGGGKS. The N-linked (GlcNAc...) asparagine glycan is linked to Asn692. A compositionally biased stretch (polar residues) spans 754–769; it reads ANTPANPVAQETSWDL. Positions 754-791 are disordered; that stretch reads ANTPANPVAQETSWDLQSDDGTEISEDTNIPSEPRTID. Positions 770–779 are enriched in acidic residues; the sequence is QSDDGTEISE.

It belongs to the ABC transporter superfamily. ABCB family. Mitochondrial peptide exporter (TC 3.A.1.212) subfamily.

It localises to the cell membrane. Functionally, pleiotropic ABC efflux transporter that may be involved in A.fumigatus adaptation to azoles. The sequence is that of ABC multidrug transporter mdr2 from Aspergillus fumigatus (strain ATCC MYA-4609 / CBS 101355 / FGSC A1100 / Af293) (Neosartorya fumigata).